The following is a 329-amino-acid chain: NADH-quinone oxidoreductase subunit H (329 aa).

Transmembrane regions (helical) follow at residues 9-29, 42-62, 75-95, 117-137, 154-174, 188-208, 238-258, 269-291, and 309-329; these read LIKILILVAVFSALGGFATYI, GPCYVGPFGLLQVAADGIKLF, FIFTLAPIIAMVSAFVSMAPI, IGFLFFLAVGAAGIYAPILAG, IQLLSFEVVSTLTILAPLMVV, GGFLDWLVFKQPLAFVLFLIA, LKWGMFFLAEYAHLFAFSFVI, WGFIPGGIAILIKAGFFVFLSMW, and WKIMLPLALLNIVLTGIIILI.

Belongs to the complex I subunit 1 family. In terms of assembly, NDH-1 is composed of 14 different subunits. Subunits NuoA, H, J, K, L, M, N constitute the membrane sector of the complex.

It is found in the cell inner membrane. The catalysed reaction is a quinone + NADH + 5 H(+)(in) = a quinol + NAD(+) + 4 H(+)(out). In terms of biological role, NDH-1 shuttles electrons from NADH, via FMN and iron-sulfur (Fe-S) centers, to quinones in the respiratory chain. The immediate electron acceptor for the enzyme in this species is believed to be ubiquinone. Couples the redox reaction to proton translocation (for every two electrons transferred, four hydrogen ions are translocated across the cytoplasmic membrane), and thus conserves the redox energy in a proton gradient. This subunit may bind ubiquinone. The protein is NADH-quinone oxidoreductase subunit H of Helicobacter pylori (strain Shi470).